The primary structure comprises 1168 residues: Probable pre-mRNA-splicing factor ATP-dependent RNA helicase DEAH5 (1168 aa).

The segment at 76–206 is disordered; that stretch reads IYPPKPKSEK…KDEYVEEDKG (131 aa). Basic and acidic residues-rich tracts occupy residues 81–172 and 180–206; these read PKSE…DRRS and GRGD…EDKG. The 70-residue stretch at 214–283 folds into the S1 motif domain; the sequence is YQVYKGRVTR…SSDKYSLSMR (70 aa). The disordered stretch occupies residues 289-326; sequence TGRDLIPLRKPSDEDDSSRSNPSYRTKDGQVTKTGISG. Position 411 is a phosphoserine (Ser-411). The 164-residue stretch at 525-688 folds into the Helicase ATP-binding domain; that stretch reads IQAVHDNQVL…FFNCNIFTIP (164 aa). 538 to 545 contacts ATP; that stretch reads GETGSGKT. Positions 635 to 638 match the DEAH box motif; sequence DEAH. The Helicase C-terminal domain maps to 706–886; the sequence is YLDAALITVL…MTTLTMKAMG (181 aa).

Belongs to the DEAD box helicase family. DEAH subfamily. PRP22 sub-subfamily.

It is found in the nucleus. The catalysed reaction is ATP + H2O = ADP + phosphate + H(+). May be involved in pre-mRNA splicing. The protein is Probable pre-mRNA-splicing factor ATP-dependent RNA helicase DEAH5 of Arabidopsis thaliana (Mouse-ear cress).